Here is a 44-residue protein sequence, read N- to C-terminus: Cytochrome b559 subunit beta (44 aa).

Residues 19–35 (WLSVHALGVPSVFFLGA) traverse the membrane as a helical segment. Position 23 (H23) interacts with heme.

Belongs to the PsbE/PsbF family. Heterodimer of an alpha subunit and a beta subunit. PSII is composed of 1 copy each of membrane proteins PsbA, PsbB, PsbC, PsbD, PsbE, PsbF, PsbH, PsbI, PsbJ, PsbK, PsbL, PsbM, PsbT, PsbX, PsbY, PsbZ, Psb30/Ycf12, peripheral proteins PsbO, CyanoQ (PsbQ), PsbU, PsbV and a large number of cofactors. It forms dimeric complexes. Requires heme b as cofactor.

Its subcellular location is the cellular thylakoid membrane. Functionally, this b-type cytochrome is tightly associated with the reaction center of photosystem II (PSII). PSII is a light-driven water:plastoquinone oxidoreductase that uses light energy to abstract electrons from H(2)O, generating O(2) and a proton gradient subsequently used for ATP formation. It consists of a core antenna complex that captures photons, and an electron transfer chain that converts photonic excitation into a charge separation. The chain is Cytochrome b559 subunit beta from Synechococcus elongatus (strain ATCC 33912 / PCC 7942 / FACHB-805) (Anacystis nidulans R2).